The primary structure comprises 223 residues: MKFFIDTANLDEIKAAAELGLLDGVTTNPSLIAKIVADPANFTYEDFKKHIAAICEIVDGPISAEVTTLEAEEMIREGEDLASIHENVVVKCPVTLEGLKAIRHFSSEGIRTNATLVFSPSQALLAAKAGATYVSPFIGRLDDISTDGMALVEQIVAIYDNYGYHTEVIVASVRHPQHVVEAALAGADIATIPFGVIKQLVRHPLTDAGLTKFMEDASVMKKS.

The Schiff-base intermediate with substrate role is filled by lysine 91.

This sequence belongs to the transaldolase family. Type 3B subfamily.

It localises to the cytoplasm. The catalysed reaction is D-sedoheptulose 7-phosphate + D-glyceraldehyde 3-phosphate = D-erythrose 4-phosphate + beta-D-fructose 6-phosphate. It participates in carbohydrate degradation; pentose phosphate pathway; D-glyceraldehyde 3-phosphate and beta-D-fructose 6-phosphate from D-ribose 5-phosphate and D-xylulose 5-phosphate (non-oxidative stage): step 2/3. Functionally, transaldolase is important for the balance of metabolites in the pentose-phosphate pathway. The protein is Probable transaldolase of Prosthecochloris aestuarii (strain DSM 271 / SK 413).